An 87-amino-acid chain; its full sequence is Large ribosomal subunit protein bL31B (87 aa).

The protein belongs to the bacterial ribosomal protein bL31 family. Type B subfamily. As to quaternary structure, part of the 50S ribosomal subunit.

The polypeptide is Large ribosomal subunit protein bL31B (Klebsiella pneumoniae (strain 342)).